We begin with the raw amino-acid sequence, 1661 residues long: ATP-dependent bile acid permease (1661 aa).

At 1–33 (MHHVLNSTRPDHRFWFYDDVTQYGRTKYLNYYT) the chain is on the lumenal side. Asparagine 6 carries N-linked (GlcNAc...) asparagine glycosylation. The helical transmembrane segment at 34 to 54 (PLVLLIFTVLFITYNIWKHYY) threads the bilayer. Residues 55–74 (YYDVLHLKQKNPIDELLYSS) are Cytoplasmic-facing. Residues 75–95 (TDEDEQSPLINNNTITTNYVD) form a helical membrane-spanning segment. Topologically, residues 96–133 (NNCTKDALKNRHFSLEKLKSVKVNGEPHGTPEIVRRGF) are lumenal. An N-linked (GlcNAc...) asparagine glycan is attached at asparagine 97. Residues 134–154 (IEKSRIILEFFLVLSQVIIHS) form a helical membrane-spanning segment. The Cytoplasmic segment spans residues 155–166 (FILLHYVNKNPE). A helical membrane pass occupies residues 167 to 187 (FTQQGTITGLVEWCALFIIVS). At 188-205 (LRLANVNQNFKFINKYPG) the chain is on the lumenal side. A helical membrane pass occupies residues 206-226 (NLWSVSFINYLALFISMILPF). Topologically, residues 227–345 (RSIFIHHINS…VKRKRIFSLN (119 aa)) are cytoplasmic. A helical membrane pass occupies residues 346-366 (LFFFFSNYLVLQCFWAFLGSV). The ABC transmembrane type-1 1 domain occupies 354–662 (LVLQCFWAFL…LSDMLSFVVQ (309 aa)). Over 367–393 (LSFIPTVLLKRILEYVEDQSSAPSNLA) the chain is Lumenal. The helical transmembrane segment at 394–414 (WFYVTVMFVGRILVAICQAQA) threads the bilayer. Residues 415–495 (LFFGRRVCIR…AFKVSEICGY (81 aa)) are Cytoplasmic-facing. The interval 445-468 (NKTKPSNEDPQEINDQKSINGDEE) is disordered. The helical transmembrane segment at 496-516 (LHSFLEAFVMTVVALALLYRL) threads the bilayer. The Lumenal portion of the chain corresponds to 517–519 (LGF). The helical transmembrane segment at 520-540 (AAIVGVLIIVAMLPLNYKLAK) threads the bilayer. Over 541-602 (YIGDLQKKNL…LLLMRSIVWS (62 aa)) the chain is Cytoplasmic. Residues 603-623 (ISSFLWFVTPTIVTAASFAYY) form a helical membrane-spanning segment. At 624 to 644 (IYVQGEVLTTPVAFTALSLFT) the chain is on the lumenal side. A helical membrane pass occupies residues 645 to 665 (LLRDPLDRLSDMLSFVVQSKV). At 666 to 1053 (SLDRVQDFLN…SWWVRAWASH (388 aa)) the chain is on the cytoplasmic side. The ABC transporter 1 domain maps to 694–935 (FAFENSTISW…GLFGEDELVK (242 aa)). 729–736 (GPTGSGKT) contacts ATP. 3 positions are modified to phosphoserine: serine 936, serine 940, and serine 955. Residues 1026 to 1345 (VSFLASLFLI…LVRLYSEVEM (320 aa)) enclose the ABC transmembrane type-1 2 domain. Residues 1054–1074 (NVIAKIIPRAQRAIAFISKKA) form a helical membrane-spanning segment. At 1075–1114 (SHLIDWRGSSQISMASAENQPSSGHSTMYYLVLYLIIGFA) the chain is on the lumenal side. The helical transmembrane segment at 1115–1135 (QALLGAGKTILNFVAGINASR) threads the bilayer. Residues 1136–1178 (KIFNMILNKVLHSKIRFFDATPTGRIMNRFSKDIEAIDQELTP) lie on the Cytoplasmic side of the membrane. The chain crosses the membrane as a helical span at residues 1179-1199 (YIQGAFYSLIECLSTVILITF). A topological domain (lumenal) is located at residue isoleucine 1200. The helical transmembrane segment at 1201-1221 (TPQFLSVAIVVSILYYFVGYF) threads the bilayer. Over 1222 to 1292 (YMAGSRELKR…VANRWLAFRI (71 aa)) the chain is Cytoplasmic. A helical membrane pass occupies residues 1293–1313 (DMIGSLVIFGAGLFILFNINN). Over 1314 to 1315 (LD) the chain is Lumenal. Residues 1316–1336 (SGMAGISLTYAISFTEGALWL) form a helical membrane-spanning segment. Residues 1337–1661 (VRLYSEVEMN…FVEKLNSKKD (325 aa)) are Cytoplasmic-facing. An ABC transporter 2 domain is found at 1381-1636 (IEVNDLSLRY…KQSAFYSMCE (256 aa)). Residue 1415 to 1422 (GRTGAGKS) coordinates ATP.

This sequence belongs to the ABC transporter superfamily. ABCC family. Conjugate transporter (TC 3.A.1.208) subfamily.

It is found in the vacuole membrane. In terms of biological role, vacuolar class C ABC transporter which regulates the translocation of phosphatidylcholine to the vacuole lumen, the release of lumenal calcium stores, and acts as a negative regulator of vacuole fusion. Exhibits ATP-dependent bile acid transport. This chain is ATP-dependent bile acid permease (YBT1), found in Saccharomyces cerevisiae (strain ATCC 204508 / S288c) (Baker's yeast).